The chain runs to 313 residues: Solute carrier family 35 member E3 (313 aa).

Transmembrane regions (helical) follow at residues 17–37 (GLLL…WIYV), 40–60 (GFPN…GLYV), 77–97 (LLLL…SLQN), 100–120 (IGTY…IQTL), 130–147 (IRLT…NSYY), 153–173 (FLGT…QVWV), 187–206 (LLYY…VPFF), 225–245 (LMVL…YWII), 252–272 (TYNM…YVLF), and 275–295 (PLSI…LAYT).

The protein belongs to the TPT transporter family. SLC35E subfamily.

It is found in the membrane. In terms of biological role, putative transporter. This Bos taurus (Bovine) protein is Solute carrier family 35 member E3 (SLC35E3).